The chain runs to 159 residues: S-ribosylhomocysteine lyase (159 aa).

His53, His57, and Cys124 together coordinate Fe cation.

Belongs to the LuxS family. In terms of assembly, homodimer. Fe cation serves as cofactor.

It carries out the reaction S-(5-deoxy-D-ribos-5-yl)-L-homocysteine = (S)-4,5-dihydroxypentane-2,3-dione + L-homocysteine. Functionally, involved in the synthesis of autoinducer 2 (AI-2) which is secreted by bacteria and is used to communicate both the cell density and the metabolic potential of the environment. The regulation of gene expression in response to changes in cell density is called quorum sensing. Catalyzes the transformation of S-ribosylhomocysteine (RHC) to homocysteine (HC) and 4,5-dihydroxy-2,3-pentadione (DPD). This is S-ribosylhomocysteine lyase from Porphyromonas gingivalis (strain ATCC BAA-308 / W83).